The following is a 485-amino-acid chain: Glutamate--tRNA ligase (485 aa).

The 'HIGH' region signature appears at 11-21; the sequence is PSPTGHLHIGG. The 'KMSKS' region signature appears at 252-256; sequence KMSKR. An ATP-binding site is contributed by Lys-255.

It belongs to the class-I aminoacyl-tRNA synthetase family. Glutamate--tRNA ligase type 1 subfamily. In terms of assembly, monomer.

It is found in the cytoplasm. It catalyses the reaction tRNA(Glu) + L-glutamate + ATP = L-glutamyl-tRNA(Glu) + AMP + diphosphate. Its function is as follows. Catalyzes the attachment of glutamate to tRNA(Glu) in a two-step reaction: glutamate is first activated by ATP to form Glu-AMP and then transferred to the acceptor end of tRNA(Glu). The sequence is that of Glutamate--tRNA ligase from Halalkalibacterium halodurans (strain ATCC BAA-125 / DSM 18197 / FERM 7344 / JCM 9153 / C-125) (Bacillus halodurans).